The primary structure comprises 145 residues: MNIKPASEASLKDWLELRNKLWSDSEASHLQEMHQLLAEKYALQLLAYSDHQAIAMLEASIRFEYVNGTETSPVGFLEGIYVLPAHRRSGVATMLIRQAEVWAKQFSCTEFASDAALDNVISHAMHRSLGFQETEKVVYFSKKID.

The region spanning 1–145 (MNIKPASEAS…KVVYFSKKID (145 aa)) is the N-acetyltransferase domain. Residues Trp-22, Tyr-65, and Glu-78 each contribute to the substrate site. 80 to 82 (IYV) serves as a coordination point for acetyl-CoA. Asp-114 is a substrate binding site. Asn-119 contacts acetyl-CoA. Glu-135 serves as a coordination point for substrate.

Homodimer.

The enzyme catalyses kanamycin B + acetyl-CoA = N(6')-acetylkanamycin B + CoA + H(+). Catalyzes the transfer of an acetyl group from acetyl-CoA to the 6'-amino group of aminoglycoside molecules conferring resistance to antibiotics containing the purpurosamine ring including amikacin, kanamycin, tobramycin and netilmicin. The chain is Aminoglycoside N(6')-acetyltransferase type 1 from Acinetobacter haemolyticus.